The sequence spans 407 residues: Phenazine 1,6-dicarboxylic acid hydroxylase PhzS (407 aa).

FAD is bound by residues G17, V134, and D313.

FAD serves as cofactor.

It carries out the reaction phenazine-1,6-dicarboxylate + NADH + O2 + 2 H(+) = 6-hydroxyphenazine-1-carboxylate + CO2 + NAD(+) + H2O. It catalyses the reaction 6-hydroxyphenazine-1-carboxylate + NADH + O2 + 2 H(+) = 1,6-dihydroxyphenazine + CO2 + NAD(+) + H2O. The enzyme catalyses phenazine-1-carboxylate + NADH + O2 + 2 H(+) = 1-hydroxyphenazine + CO2 + NAD(+) + H2O. Its function is as follows. Involved in the biosynthesis of phenazine natural products including myxin, an N(5),N(10)-dioxide phenazine antiobiotic, which has antimicrobial activity. Catalyzes the decarboxylative hydroxylations of phenazine 1,6-dicarboxylic acid (PDC) to produce 1,6-dihydroxyphenazine (DHP). Low activity with phenazine 1-carboxylic acid (PCA) to produce 1-hydroxyphenazine. The sequence is that of Phenazine 1,6-dicarboxylic acid hydroxylase PhzS from Lysobacter antibioticus.